The following is a 241-amino-acid chain: Uridylate kinase (241 aa).

12 to 15 (KLSG) provides a ligand contact to ATP. A UMP-binding site is contributed by G54. Positions 55 and 59 each coordinate ATP. Residues D74 and 135–142 (VGAPYFTT) contribute to the UMP site. The ATP site is built by T162, Y168, and D171.

This sequence belongs to the UMP kinase family. In terms of assembly, homohexamer.

The protein resides in the cytoplasm. It catalyses the reaction UMP + ATP = UDP + ADP. Its pathway is pyrimidine metabolism; CTP biosynthesis via de novo pathway; UDP from UMP (UMPK route): step 1/1. Its activity is regulated as follows. Inhibited by UTP. Catalyzes the reversible phosphorylation of UMP to UDP. The polypeptide is Uridylate kinase (Sphingopyxis alaskensis (strain DSM 13593 / LMG 18877 / RB2256) (Sphingomonas alaskensis)).